Reading from the N-terminus, the 514-residue chain is Putative thymidine phosphorylase (514 aa).

This sequence belongs to the thymidine/pyrimidine-nucleoside phosphorylase family. Type 2 subfamily.

It carries out the reaction thymidine + phosphate = 2-deoxy-alpha-D-ribose 1-phosphate + thymine. The sequence is that of Putative thymidine phosphorylase from Rhodopseudomonas palustris (strain ATCC BAA-98 / CGA009).